Reading from the N-terminus, the 180-residue chain is Large ribosomal subunit protein uL5 (180 aa).

It belongs to the universal ribosomal protein uL5 family. Part of the 50S ribosomal subunit; part of the 5S rRNA/L5/L18/L25 subcomplex. Contacts the 5S rRNA and the P site tRNA. Forms a bridge to the 30S subunit in the 70S ribosome.

This is one of the proteins that bind and probably mediate the attachment of the 5S RNA into the large ribosomal subunit, where it forms part of the central protuberance. In the 70S ribosome it contacts protein S13 of the 30S subunit (bridge B1b), connecting the 2 subunits; this bridge is implicated in subunit movement. Contacts the P site tRNA; the 5S rRNA and some of its associated proteins might help stabilize positioning of ribosome-bound tRNAs. The sequence is that of Large ribosomal subunit protein uL5 from Xanthomonas euvesicatoria pv. vesicatoria (strain 85-10) (Xanthomonas campestris pv. vesicatoria).